Consider the following 216-residue polypeptide: MSIALKQVFNKDKTFRPKRKFEPGTQRFELHKRAQASLNSGVDLKAAVQLPSGEDQNDWVAVHVVDFFNRINLIYGTICEFCTERTCPVMSGGPKYEYRWQDDLKYKKPTALPAPQYMNLLMDWIEVQINNEEIFPTCVGVPFPKNFLQICKKILCRLFRVFVHVYIHHFDRVIVMGAEAHVNTCYKHFYYFVTEMNLIDRKELEPLKEMTSRMCH.

Residues cysteine 82, cysteine 87, histidine 164, and histidine 169 each contribute to the Zn(2+) site.

The protein belongs to the MOB1/phocein family.

Its function is as follows. Modulates LATS1 expression in the Hippo signaling pathway which plays a pivotal role in organ size control and tumor suppression by restricting proliferation and promoting apoptosis. The protein is MOB kinase activator 3B of Homo sapiens (Human).